Consider the following 176-residue polypeptide: Late embryogenesis abundant protein 49 (176 aa).

SMP domains follow at residues 49–106 (TTLT…RNQK) and 115–171 (NLGD…KLNH).

This sequence belongs to the LEA type SMP family.

The protein resides in the cytoplasm. It is found in the nucleus. LEA proteins are late embryonic proteins abundant in higher plant seed embryos. The function of those proteins is not known. The sequence is that of Late embryogenesis abundant protein 49 from Arabidopsis thaliana (Mouse-ear cress).